The sequence spans 325 residues: Tetraacyldisaccharide 4'-kinase (325 aa).

53–60 (SVGGNGKT) is an ATP binding site.

The protein belongs to the LpxK family.

It carries out the reaction a lipid A disaccharide + ATP = a lipid IVA + ADP + H(+). It participates in glycolipid biosynthesis; lipid IV(A) biosynthesis; lipid IV(A) from (3R)-3-hydroxytetradecanoyl-[acyl-carrier-protein] and UDP-N-acetyl-alpha-D-glucosamine: step 6/6. Functionally, transfers the gamma-phosphate of ATP to the 4'-position of a tetraacyldisaccharide 1-phosphate intermediate (termed DS-1-P) to form tetraacyldisaccharide 1,4'-bis-phosphate (lipid IVA). The polypeptide is Tetraacyldisaccharide 4'-kinase (Actinobacillus succinogenes (strain ATCC 55618 / DSM 22257 / CCUG 43843 / 130Z)).